We begin with the raw amino-acid sequence, 285 residues long: Methylamine utilization protein MauF (285 aa).

Helical transmembrane passes span 39–59 (LGGL…LSQT), 63–83 (GVAV…LSTW), 120–140 (AVGA…LGFG), 144–164 (FGAL…QLGF), 184–204 (FPVW…YLTY), 209–229 (ILYL…AILL), and 265–285 (ALLD…FAAL).

It localises to the cell membrane. The protein operates within one-carbon metabolism; methylamine degradation. In Methylorubrum extorquens (strain ATCC 14718 / DSM 1338 / JCM 2805 / NCIMB 9133 / AM1) (Methylobacterium extorquens), this protein is Methylamine utilization protein MauF (mauF).